Reading from the N-terminus, the 513-residue chain is 2-isopropylmalate synthase (513 aa).

The Pyruvate carboxyltransferase domain maps to 4 to 268 (IKIFDTTLRD…ETGIRTELIY (265 aa)). Positions 13, 203, 205, and 239 each coordinate Mn(2+). Residues 392-513 (RLVHFHVHTG…GLLRKNGGVE (122 aa)) form a regulatory domain region.

The protein belongs to the alpha-IPM synthase/homocitrate synthase family. LeuA type 1 subfamily. As to quaternary structure, homodimer. Mn(2+) is required as a cofactor.

It localises to the cytoplasm. It carries out the reaction 3-methyl-2-oxobutanoate + acetyl-CoA + H2O = (2S)-2-isopropylmalate + CoA + H(+). Its pathway is amino-acid biosynthesis; L-leucine biosynthesis; L-leucine from 3-methyl-2-oxobutanoate: step 1/4. Catalyzes the condensation of the acetyl group of acetyl-CoA with 3-methyl-2-oxobutanoate (2-ketoisovalerate) to form 3-carboxy-3-hydroxy-4-methylpentanoate (2-isopropylmalate). The polypeptide is 2-isopropylmalate synthase (Thermotoga neapolitana (strain ATCC 49049 / DSM 4359 / NBRC 107923 / NS-E)).